Reading from the N-terminus, the 67-residue chain is uncharacterized protein (67 aa).

The chain crosses the membrane as a helical span at residues W4 to F24.

The protein resides in the membrane. This is an uncharacterized protein from Bacillus anthracis.